A 367-amino-acid chain; its full sequence is UDP-N-acetylglucosamine--N-acetylmuramyl-(pentapeptide) pyrophosphoryl-undecaprenol N-acetylglucosamine transferase (367 aa).

Residues 15–17, Asn-127, Arg-163, Ser-191, Ile-249, and Gln-294 each bind UDP-N-acetyl-alpha-D-glucosamine; that span reads TGG.

The protein belongs to the glycosyltransferase 28 family. MurG subfamily.

The protein resides in the cell inner membrane. It catalyses the reaction di-trans,octa-cis-undecaprenyl diphospho-N-acetyl-alpha-D-muramoyl-L-alanyl-D-glutamyl-meso-2,6-diaminopimeloyl-D-alanyl-D-alanine + UDP-N-acetyl-alpha-D-glucosamine = di-trans,octa-cis-undecaprenyl diphospho-[N-acetyl-alpha-D-glucosaminyl-(1-&gt;4)]-N-acetyl-alpha-D-muramoyl-L-alanyl-D-glutamyl-meso-2,6-diaminopimeloyl-D-alanyl-D-alanine + UDP + H(+). The protein operates within cell wall biogenesis; peptidoglycan biosynthesis. Its function is as follows. Cell wall formation. Catalyzes the transfer of a GlcNAc subunit on undecaprenyl-pyrophosphoryl-MurNAc-pentapeptide (lipid intermediate I) to form undecaprenyl-pyrophosphoryl-MurNAc-(pentapeptide)GlcNAc (lipid intermediate II). The sequence is that of UDP-N-acetylglucosamine--N-acetylmuramyl-(pentapeptide) pyrophosphoryl-undecaprenol N-acetylglucosamine transferase from Burkholderia cenocepacia (strain HI2424).